A 122-amino-acid chain; its full sequence is Putative iron-sulfur cluster insertion protein ErpA (122 aa).

Iron-sulfur cluster is bound by residues Cys-50, Cys-114, and Cys-116.

Belongs to the HesB/IscA family. Homodimer. It depends on iron-sulfur cluster as a cofactor.

In terms of biological role, required for insertion of 4Fe-4S clusters. This is Putative iron-sulfur cluster insertion protein ErpA from Cupriavidus metallidurans (strain ATCC 43123 / DSM 2839 / NBRC 102507 / CH34) (Ralstonia metallidurans).